The chain runs to 315 residues: NAD kinase (315 aa).

Aspartate 91 acts as the Proton acceptor in catalysis. Residues 91–92 (DG), arginine 96, 165–166 (NE), aspartate 195, and 206–211 (TAYAFS) contribute to the NAD(+) site.

The protein belongs to the NAD kinase family. A divalent metal cation serves as cofactor.

Its subcellular location is the cytoplasm. It catalyses the reaction NAD(+) + ATP = ADP + NADP(+) + H(+). Involved in the regulation of the intracellular balance of NAD and NADP, and is a key enzyme in the biosynthesis of NADP. Catalyzes specifically the phosphorylation on 2'-hydroxyl of the adenosine moiety of NAD to yield NADP. The sequence is that of NAD kinase from Rhodococcus erythropolis (strain PR4 / NBRC 100887).